We begin with the raw amino-acid sequence, 264 residues long: Small ribosomal subunit protein uS2 (264 aa).

The protein belongs to the universal ribosomal protein uS2 family.

The polypeptide is Small ribosomal subunit protein uS2 (Helicobacter pylori (strain Shi470)).